A 142-amino-acid polypeptide reads, in one-letter code: Protein NIM1-INTERACTING 1 (142 aa).

Residues 47–53 form an involved in NPR1/NIM1 interaction region; that stretch reads DTFFKLI. Positions 60–64 match the Nuclear localization signal motif; the sequence is RKRRR. Disordered regions lie at residues 63-86 and 108-142; these read RREE…RSGI and MFVS…NLAL. A coiled-coil region spans residues 110 to 141; it reads VSDHKEENTKVEQEEDQTEERNEDKALDLNLA. Residues 111–121 show a composition bias toward basic and acidic residues; that stretch reads SDHKEENTKVE.

This sequence belongs to the NPR1-interactor family. In terms of assembly, interacts with NPR1 C-terminal region.

The protein localises to the nucleus. This chain is Protein NIM1-INTERACTING 1, found in Arabidopsis thaliana (Mouse-ear cress).